A 232-amino-acid chain; its full sequence is Small ribosomal subunit protein uS3 (232 aa).

Residues 39–107 (VRQFLTSELK…PAQINIAEVR (69 aa)) enclose the KH type-2 domain. The disordered stretch occupies residues 213–232 (AANAVEPKGDKPKKQRKGRK).

This sequence belongs to the universal ribosomal protein uS3 family. Part of the 30S ribosomal subunit. Forms a tight complex with proteins S10 and S14.

In terms of biological role, binds the lower part of the 30S subunit head. Binds mRNA in the 70S ribosome, positioning it for translation. This chain is Small ribosomal subunit protein uS3, found in Vibrio parahaemolyticus serotype O3:K6 (strain RIMD 2210633).